A 278-amino-acid polypeptide reads, in one-letter code: Tetraspanin-13 (278 aa).

At Met1 to Thr25 the chain is on the cytoplasmic side. The chain crosses the membrane as a helical span at residues Ile26–Met46. At Thr47–Pro62 the chain is on the extracellular side. A helical membrane pass occupies residues Gly63 to Phe83. Residues Lys84–His92 are Cytoplasmic-facing. A helical membrane pass occupies residues Phe93–Leu113. Residues His114 to Thr249 lie on the Extracellular side of the membrane. Residues Asn202, Asn220, and Asn243 are each glycosylated (N-linked (GlcNAc...) asparagine). Residues Val250–Leu270 form a helical membrane-spanning segment. Residues Arg271–Lys278 are Cytoplasmic-facing.

Belongs to the tetraspanin (TM4SF) family.

Its subcellular location is the membrane. May be involved in the regulation of cell differentiation. This is Tetraspanin-13 (TET13) from Arabidopsis thaliana (Mouse-ear cress).